Reading from the N-terminus, the 563-residue chain is Arginine--tRNA ligase (563 aa).

A 'HIGH' region motif is present at residues 121–131; it reads PNIAKPFSIGH.

This sequence belongs to the class-I aminoacyl-tRNA synthetase family. In terms of assembly, monomer.

The protein localises to the cytoplasm. The catalysed reaction is tRNA(Arg) + L-arginine + ATP = L-arginyl-tRNA(Arg) + AMP + diphosphate. The protein is Arginine--tRNA ligase of Streptococcus pyogenes serotype M2 (strain MGAS10270).